A 36-amino-acid chain; its full sequence is Glucagon-1 (36 aa).

This sequence belongs to the glucagon family.

Its subcellular location is the secreted. Promotes hydrolysis of glycogen and lipids, and raises the blood sugar level. This is Glucagon-1 (gcg1) from Oreochromis niloticus (Nile tilapia).